We begin with the raw amino-acid sequence, 153 residues long: Putative OPA3-like protein CG43998 (153 aa).

Positions 101–153 form a coiled coil; that stretch reads ELSKTYTKTKKQNQEIEDQKRVLDECVDCISADVERNQREINWIKAALKNVEK.

It belongs to the OPA3 family.

This chain is Putative OPA3-like protein CG43998, found in Drosophila melanogaster (Fruit fly).